The primary structure comprises 411 residues: Glutamate dehydrogenase 1 (411 aa).

K102 is a catalytic residue.

This sequence belongs to the Glu/Leu/Phe/Val dehydrogenases family.

It catalyses the reaction L-glutamate + NAD(+) + H2O = 2-oxoglutarate + NH4(+) + NADH + H(+). It carries out the reaction L-glutamate + NADP(+) + H2O = 2-oxoglutarate + NH4(+) + NADPH + H(+). The polypeptide is Glutamate dehydrogenase 1 (GDH1) (Arabidopsis thaliana (Mouse-ear cress)).